Consider the following 61-residue polypeptide: Hepcidin (61 aa).

The tract at residues 1-24 (LQVLTEEVGSIDSPVGEHQQPGGE) is disordered. Positions 1-34 (LQVLTEEVGSIDSPVGEHQQPGGESMRLPEHFRF) are excised as a propeptide. 4 cysteine pairs are disulfide-bonded: Cys-43-Cys-59, Cys-46-Cys-49, Cys-47-Xaa-55, and Cys-50-Cys-58.

It belongs to the hepcidin family.

The protein resides in the secreted. Its function is as follows. Seems to act as a signaling molecule involved in the maintenance of iron homeostasis. Seems to be required in conjunction with HFE to regulate both intestinal iron absorption and iron storage in macrophages. May also have antimicrobial activity. This Oncorhynchus mykiss (Rainbow trout) protein is Hepcidin (hamp).